The sequence spans 436 residues: Glutamate-1-semialdehyde 2,1-aminomutase (436 aa).

Lys274 carries the post-translational modification N6-(pyridoxal phosphate)lysine.

Belongs to the class-III pyridoxal-phosphate-dependent aminotransferase family. HemL subfamily. In terms of assembly, homodimer. Pyridoxal 5'-phosphate is required as a cofactor.

It is found in the cytoplasm. It carries out the reaction (S)-4-amino-5-oxopentanoate = 5-aminolevulinate. It participates in porphyrin-containing compound metabolism; protoporphyrin-IX biosynthesis; 5-aminolevulinate from L-glutamyl-tRNA(Glu): step 2/2. This Albidiferax ferrireducens (strain ATCC BAA-621 / DSM 15236 / T118) (Rhodoferax ferrireducens) protein is Glutamate-1-semialdehyde 2,1-aminomutase.